The sequence spans 269 residues: Interleukin-1 beta (269 aa).

A propeptide spanning residues 1-116 is cleaved from the precursor; sequence MAEVPELASE…TRNNDACVHD (116 aa).

The protein belongs to the IL-1 family. Monomer. In its precursor form, weakly interacts with full-length MEFV; the mature cytokine does not interact at all. Interacts with integrins ITGAV:ITGBV and ITGA5:ITGB1; integrin-binding is required for IL1B signaling. Interacts with cargo receptor TMED10; the interaction is direct and is required for the secretion of IL1B mature form. Interacts with HSP90AB1; the interaction facilitates cargo translocation into the ERGIC. Interacts with HSP90B1; the interaction facilitates cargo translocation into the ERGIC.

The protein resides in the cytoplasm. It localises to the cytosol. It is found in the secreted. The protein localises to the lysosome. Its subcellular location is the extracellular exosome. Potent pro-inflammatory cytokine. Initially discovered as the major endogenous pyrogen, induces prostaglandin synthesis, neutrophil influx and activation, T-cell activation and cytokine production, B-cell activation and antibody production, and fibroblast proliferation and collagen production. Promotes Th17 differentiation of T-cells. Synergizes with IL12/interleukin-12 to induce IFNG synthesis from T-helper 1 (Th1) cells. Plays a role in angiogenesis by inducing VEGF production synergistically with TNF and IL6. Involved in transduction of inflammation downstream of pyroptosis: its mature form is specifically released in the extracellular milieu by passing through the gasdermin-D (GSDMD) pore. The chain is Interleukin-1 beta (IL1B) from Macaca nemestrina (Pig-tailed macaque).